The primary structure comprises 120 residues: Ribonuclease P protein component (120 aa).

This sequence belongs to the RnpA family. In terms of assembly, consists of a catalytic RNA component (M1 or rnpB) and a protein subunit.

The catalysed reaction is Endonucleolytic cleavage of RNA, removing 5'-extranucleotides from tRNA precursor.. Functionally, RNaseP catalyzes the removal of the 5'-leader sequence from pre-tRNA to produce the mature 5'-terminus. It can also cleave other RNA substrates such as 4.5S RNA. The protein component plays an auxiliary but essential role in vivo by binding to the 5'-leader sequence and broadening the substrate specificity of the ribozyme. This Mycobacterium marinum (strain ATCC BAA-535 / M) protein is Ribonuclease P protein component.